The primary structure comprises 100 residues: Large ribosomal subunit protein bL21 (100 aa).

It belongs to the bacterial ribosomal protein bL21 family. Part of the 50S ribosomal subunit. Contacts protein L20.

This protein binds to 23S rRNA in the presence of protein L20. The sequence is that of Large ribosomal subunit protein bL21 from Corynebacterium urealyticum (strain ATCC 43042 / DSM 7109).